A 574-amino-acid chain; its full sequence is MKETIQGTGSWGPEPPGPGIPPAYSSPRRERLRWPPPPKPRLKSGGGFGPDPGSGTTVPARRLPVPRPSFDASASEEEEEEEEEEDEDEEEEVAAWRLPPRWSQLGTSQRPRPSRPTHRKTCSQRRRRAMRAFRMLLYSKSTSLTFHWKLWGRHRGRRRGLAHPKNHLSPQQGGATPQVPSPCCRFDSPRGPPPPRLGLLGALMAEDGVRGSPPVPSGPPMEEDGLRWTPKSPLDPDSGLLSCTLPNGFGGQSGPEGERSLAPPDASILISNVCSIGDHVAQELFQGSDLGMAEEAERPGEKAGQHSPLREEHVTCVQSILDEFLQTYGSLIPLSTDEVVEKLEDIFQQEFSTPSRKGLVLQLIQSYQRMPGNAMVRGFRVAYKRHVLTMDDLGTLYGQNWLNDQVMNMYGDLVMDTVPEKVHFFNSFFYDKLRTKGYDGVKRWTKNVDIFNKELLLIPIHLEVHWSLISVDVRRRTITYFDSQRTLNRRCPKHIAKYLQAEAVKKDRLDFHQGWKGYFKMNVARQNNDSDCGAFVLQYCKHLALSQPFSFTQQDMPKLRRQIYKELCHCKLTV.

Residues 1-125 (MKETIQGTGS…PTHRKTCSQR (125 aa)) form a disordered region. Phosphoserine is present on residues Ser54, Ser73, and Ser75. Residues 74 to 93 (ASEEEEEEEEEEDEDEEEEV) are compositionally biased toward acidic residues. The segment covering 112–125 (RPSRPTHRKTCSQR) has biased composition (basic residues). 2 short sequence motifs (nuclear localization signal) span residues 125-128 (RRRR) and 153-159 (RHRGRRR). The disordered stretch occupies residues 161–181 (LAHPKNHLSPQQGGATPQVPS). A Phosphoserine modification is found at Ser169. Residue Thr176 is modified to Phosphothreonine. 4 positions are modified to phosphoserine: Ser181, Ser188, Ser212, and Ser232. A protease region spans residues 386–543 (HVLTMDDLGT…AFVLQYCKHL (158 aa)). Active-site residues include His465 and Asp482. The active-site Nucleophile is the Cys532.

Belongs to the peptidase C48 family. In terms of assembly, component of some MLL1/MLL complex, at least composed of the core components KMT2A/MLL1, ASH2L, HCFC1/HCF1, WDR5 and RBBP5, as well as the facultative components BACC1, CHD8, E2F6, HSP70, INO80C, KANSL1, LAS1L, MAX, MCRS1, MGA, MYST1/MOF, PELP1, PHF20, PRP31, RING2, RUVB1/TIP49A, RUVB2/TIP49B, SENP3, TAF1, TAF4, TAF6, TAF7, TAF9 and TEX10. Interacts with EP300, NPM1 and CDCA8. Component of the 5FMC complex, at least composed of PELP1, LAS1L, TEX10, WDR18 and SENP3; the complex interacts with methylated CHTOP and ZNF148. Interacts with NOL9. Interacts with CCAR2.

It localises to the nucleus. It is found in the nucleolus. The protein resides in the nucleoplasm. The protein localises to the cytoplasm. Its activity is regulated as follows. On oxidative stress, SENP3 degradation is blocked by inhibition of its ubiquitination, which stabilizes it as it accumulates in the nucleoplasm. Functionally, protease that releases SUMO2 and SUMO3 monomers from sumoylated substrates, but has only weak activity against SUMO1 conjugates. Deconjugates SUMO2 from MEF2D, which increases its transcriptional activation capability. Deconjugates SUMO2 and SUMO3 from CDCA8. Redox sensor that, when redistributed into nucleoplasm, can act as an effector to enhance HIF1A transcriptional activity by desumoylating EP300. Required for rRNA processing through deconjugation of SUMO2 and SUMO3 from nucleophosmin, NPM1. Plays a role in the regulation of sumoylation status of ZNF148. Functions as a component of the Five Friends of Methylated CHTOP (5FMC) complex; the 5FMC complex is recruited to ZNF148 by methylated CHTOP, leading to desumoylation of ZNF148 and subsequent transactivation of ZNF148 target genes. Deconjugates SUMO2 from KAT5. Catalyzes desumoylation of MRE11. This chain is Sentrin-specific protease 3, found in Homo sapiens (Human).